The primary structure comprises 291 residues: ATP synthase gamma chain (291 aa).

It belongs to the ATPase gamma chain family. In terms of assembly, F-type ATPases have 2 components, CF(1) - the catalytic core - and CF(0) - the membrane proton channel. CF(1) has five subunits: alpha(3), beta(3), gamma(1), delta(1), epsilon(1). CF(0) has three main subunits: a, b and c.

It localises to the cell inner membrane. In terms of biological role, produces ATP from ADP in the presence of a proton gradient across the membrane. The gamma chain is believed to be important in regulating ATPase activity and the flow of protons through the CF(0) complex. The sequence is that of ATP synthase gamma chain from Sulfurihydrogenibium sp. (strain YO3AOP1).